The sequence spans 2410 residues: Coprinoferrin synthetase (2410 aa).

The tract at residues 237-646 (LERRAKTNPH…GRIDTQIKVR (410 aa)) is adenylation 1. The Carrier 1 domain maps to 783-860 (RDCTPLEAEV…DIAQLVHVST (78 aa)). Residue S820 is modified to O-(pantetheine 4'-phosphoryl)serine. The condensation 1 stretch occupies residues 891-1260 (DILPPFPVQE…SVEAVVNVHD (370 aa)). Positions 1298-1317 (ELPLPSRRSPEPVRKVNDDE) are disordered. Over residues 1305-1314 (RSPEPVRKVN) the composition is skewed to basic and acidic residues. Residues 1324 to 1400 (LLDPVVVADL…RLARVVSNNK (77 aa)) form the Carrier 2 domain. At S1361 the chain carries O-(pantetheine 4'-phosphoryl)serine. Residues 1436 to 1839 (IIPSTALQSG…RIGRTFSVPS (404 aa)) form a condensation 2 region. Positions 1858–1932 (VQAGIIHPVL…DLVLQATEIK (75 aa)) constitute a Carrier 3 domain. The residue at position 1893 (S1893) is an O-(pantetheine 4'-phosphoryl)serine. Residues 1992 to 2315 (FQYLFTFKLP…TPIFNVNVNV (324 aa)) form a condensation 3 region.

The protein belongs to the NRP synthetase family.

Its pathway is siderophore biosynthesis. Its function is as follows. Nonribosomal peptide synthase; part of the gene cluster that mediates the biosynthesis of coprinoferrin, an acylated tripeptide hydroxamate siderophore. The biosynthesis of coprinoferrin depends on the hydroxylation of ornithine to N(5)-hydroxyornithine, catalyzed by the monooxygenase cpf2. The second step, the acylation of N(5)-hydroxy-L-ornithine to yield N(5)-hexanoyl-N(5)-hydroxyl-L-ornithine is catalyzed by a not yet identified acyltransferase. Finally, assembly of coprinoferrin is catalyzed by the nonribosomal peptide synthase (NRPS) cpf1 via amide bond formation between three N(5)-hexanoyl-N(5)-hydroxyl-L-ornithine molecules to release the linear trimer. Interestingly, proteins seemingly not directly related to biosynthesis, such as transcription factors, replication factors, and autophagy-related proteins, are conserved among the clusters homologous to the coprinoferrin cluster, suggesting that the cluster may also play developmental and cell biological functions. In Coprinopsis cinerea (strain Okayama-7 / 130 / ATCC MYA-4618 / FGSC 9003) (Inky cap fungus), this protein is Coprinoferrin synthetase.